A 321-amino-acid chain; its full sequence is Cytochrome f (321 aa).

The N-terminal stretch at 1-37 (MKIYRQIKQSFSITKIVFSFFISLLLNLVAQPTICQA) is a signal peptide. Residues Phe38, Cys58, Cys61, and His62 each contribute to the heme site. A helical membrane pass occupies residues 287–306 (VQGLIAFFISVVLAQIFLVL).

The protein belongs to the cytochrome f family. The 4 large subunits of the cytochrome b6-f complex are cytochrome b6, subunit IV (17 kDa polypeptide, petD), cytochrome f and the Rieske protein, while the 4 small subunits are PetG, PetL, PetM and PetN. The complex functions as a dimer. Requires heme as cofactor.

The protein resides in the plastid. Its subcellular location is the cyanelle thylakoid membrane. Component of the cytochrome b6-f complex, which mediates electron transfer between photosystem II (PSII) and photosystem I (PSI), cyclic electron flow around PSI, and state transitions. The protein is Cytochrome f (petA) of Cyanophora paradoxa.